The chain runs to 362 residues: E3 ubiquitin-protein ligase TM129 (362 aa).

Topologically, residues 1 to 6 (MDSPEV) are lumenal. A helical membrane pass occupies residues 7–27 (TFTLAYLVFAVCFVFTPTEFH). Over 28-56 (SAGLTVQNLLSGWLGSEDAAFVPYHLRRT) the chain is Cytoplasmic. The helical transmembrane segment at 57–77 (AATLLCHSLLPLGYYVGMCFA) threads the bilayer. Topologically, residues 78 to 94 (ASEKQLYYPSQTPETWR) are lumenal. Residues 95–115 (AFLLLALMLPAIACTLIYYWS) form a helical membrane-spanning segment. Residues 116–362 (RDHWACHPLA…FCVLDVCAVR (247 aa)) lie on the Cytoplasmic side of the membrane. The RING-type; degenerate zinc finger occupies 285–350 (CIGCMQTQAS…ASRVPCPTCR (66 aa)).

Belongs to the TMEM129 family. In terms of assembly, integral component of ER-resident dislocation complexes.

The protein localises to the endoplasmic reticulum membrane. It carries out the reaction S-ubiquitinyl-[E2 ubiquitin-conjugating enzyme]-L-cysteine + [acceptor protein]-L-lysine = [E2 ubiquitin-conjugating enzyme]-L-cysteine + N(6)-ubiquitinyl-[acceptor protein]-L-lysine.. It functions in the pathway protein modification; protein ubiquitination. E3 ubiquitin-protein ligase involved in ER-associated protein degradation, preferentially associates with the E2 enzyme UBE2J2. Exploited by viral US11 proteins to mediate HLA class I proteins degradation. The polypeptide is E3 ubiquitin-protein ligase TM129 (TMEM129) (Bos taurus (Bovine)).